Reading from the N-terminus, the 320-residue chain is Cytosolic Fe-S cluster assembly factor NUBP1 (320 aa).

Residue M1 is modified to N-acetylmethionine. The [4Fe-4S] cluster site is built by C8, C22, C25, and C31. Position 62-69 (62-69 (GKGGVGKS)) interacts with ATP. [4Fe-4S] cluster is bound by residues C235 and C238.

Belongs to the Mrp/NBP35 ATP-binding proteins family. NUBP1/NBP35 subfamily. Heterotetramer of 2 NUBP1 and 2 NUBP2 chains. Interacts with KIFC1. Interacts with the BBS/CCT complex subunit CCT1. [4Fe-4S] cluster is required as a cofactor.

It is found in the cytoplasm. The protein localises to the nucleus. The protein resides in the cell projection. It localises to the cytoskeleton. Its subcellular location is the cilium axoneme. It is found in the cilium basal body. The protein localises to the microtubule organizing center. The protein resides in the centrosome. It localises to the centriole. Functionally, component of the cytosolic iron-sulfur (Fe/S) protein assembly (CIA) machinery. Required for maturation of extramitochondrial Fe-S proteins. The NUBP1-NUBP2 heterotetramer forms a Fe-S scaffold complex, mediating the de novo assembly of an Fe-S cluster and its transfer to target apoproteins. Implicated in the regulation of centrosome duplication. Negatively regulates cilium formation and structure. In Bos taurus (Bovine), this protein is Cytosolic Fe-S cluster assembly factor NUBP1.